The sequence spans 172 residues: Scytalone dehydratase-like protein Arp1 (172 aa).

Tyr49 is a substrate binding site. Residues His84 and His109 contribute to the active site. Residue Asn130 coordinates substrate.

Belongs to the scytalone dehydratase family. In terms of assembly, homotrimer. Each subunit contains an active site, located in the central part of the hydrophobic core of the monomer, which functions independently.

In terms of biological role, scytalone dehydratase-like protein; part of the Pks2 gene cluster that mediates the formation of infectious structures (appressoria), enabling these fungi to kill insects faster. The product of the Pks2 gene cluster is different from the one of Pks1 and has still not been identified. In Metarhizium guizhouense (strain ARSEF 977), this protein is Scytalone dehydratase-like protein Arp1.